Reading from the N-terminus, the 537-residue chain is CTP synthase (537 aa).

An amidoligase domain region spans residues 1–265; sequence MTKFIFVTGG…GKYLIKRLKL (265 aa). Ser13 lines the CTP pocket. Residue Ser13 coordinates UTP. Residue 14–19 participates in ATP binding; it reads GLGKGI. Tyr54 contributes to the L-glutamine binding site. Residue Asp71 coordinates ATP. Mg(2+) contacts are provided by Asp71 and Glu139. Residues 146–148, 186–191, and Lys222 contribute to the CTP site; these read DIE and KTKPTQ. Residues 186 to 191 and Lys222 contribute to the UTP site; that span reads KTKPTQ. The region spanning 290-532 is the Glutamine amidotransferase type-1 domain; it reads EIAIVGKYVK…VRAAKEYKQE (243 aa). Residue Gly351 participates in L-glutamine binding. Catalysis depends on Cys378, which acts as the Nucleophile; for glutamine hydrolysis. Residues 379-382, Glu402, and Arg459 each bind L-glutamine; that span reads FGFQ. Active-site residues include His505 and Glu507.

The protein belongs to the CTP synthase family. In terms of assembly, homotetramer.

It carries out the reaction UTP + L-glutamine + ATP + H2O = CTP + L-glutamate + ADP + phosphate + 2 H(+). The catalysed reaction is L-glutamine + H2O = L-glutamate + NH4(+). It catalyses the reaction UTP + NH4(+) + ATP = CTP + ADP + phosphate + 2 H(+). The protein operates within pyrimidine metabolism; CTP biosynthesis via de novo pathway; CTP from UDP: step 2/2. Allosterically activated by GTP, when glutamine is the substrate; GTP has no effect on the reaction when ammonia is the substrate. The allosteric effector GTP functions by stabilizing the protein conformation that binds the tetrahedral intermediate(s) formed during glutamine hydrolysis. Inhibited by the product CTP, via allosteric rather than competitive inhibition. Catalyzes the ATP-dependent amination of UTP to CTP with either L-glutamine or ammonia as the source of nitrogen. Regulates intracellular CTP levels through interactions with the four ribonucleotide triphosphates. This chain is CTP synthase, found in Pyrococcus horikoshii (strain ATCC 700860 / DSM 12428 / JCM 9974 / NBRC 100139 / OT-3).